The sequence spans 370 residues: Platelet-derived growth factor D (370 aa).

The signal sequence occupies residues 1 to 18 (MHRLIFVCTLVCANFCSC). In terms of domain architecture, CUB spans 52–170 (RDETIQVRGN…PGFKIYYSLL (119 aa)). A disulfide bond links Cys-109 and Cys-131. Asn-276 carries N-linked (GlcNAc...) asparagine glycosylation. Disulfide bonds link Cys-302/Cys-360 and Cys-306/Cys-362.

It belongs to the PDGF/VEGF growth factor family. In terms of assembly, homodimer; disulfide-linked. Interacts with PDGFRB homodimers, and with heterodimers formed by PDGFRA and PDGFRB. In terms of processing, activated by proteolytic cleavage. Proteolytic removal of the N-terminal CUB domain releasing the core domain is necessary for unmasking the receptor-binding epitopes of the core domain. Cleavage after Arg-247 or Arg-249 by urokinase plasminogen activator gives rise to the active form.

The protein resides in the secreted. In terms of biological role, growth factor that plays an essential role in the regulation of embryonic development, cell proliferation, cell migration, survival and chemotaxis. Potent mitogen for cells of mesenchymal origin. Plays an important role in wound healing. Induces macrophage recruitment, increased interstitial pressure, and blood vessel maturation during angiogenesis. Can initiate events that lead to a mesangial proliferative glomerulonephritis, including influx of monocytes and macrophages and production of extracellular matrix. The chain is Platelet-derived growth factor D (PDGFD) from Pongo abelii (Sumatran orangutan).